The chain runs to 350 residues: Carbamoyl dehydratase HypE (350 aa).

Cys-350 is subject to S-carbamoylcysteine. Cys-350 is subject to S-cyanocysteine.

This sequence belongs to the HypE family. Modified by HypF, which adds a carboxamido group to the thiolate of the C-terminal cysteine, yielding a protein-S-carboxamide. The carboxamido group is then dehydrated by HypE itself to yield a protein-thiocyanate.

It carries out the reaction C-terminal S-carboxamide-L-cysteinyl-[HypE protein] + ATP = C-terminal S-cyanate-L-cysteinyl-[HypE protein] + ADP + phosphate + H(+). The protein operates within protein modification; [NiFe] hydrogenase maturation. Its function is as follows. Involved in the maturation of [NiFe] hydrogenases. Along with HypF, it catalyzes the synthesis of the CN ligands of the active site iron of [NiFe]-hydrogenases. HypE catalyzes the ATP-dependent dehydration of the carboxamido group attached to its C-terminal cysteine to a cyano group. The sequence is that of Carbamoyl dehydratase HypE from Rhizobium leguminosarum bv. viciae.